The following is a 238-amino-acid chain: UPF0173 metal-dependent hydrolase Helmi_16730 (238 aa).

Belongs to the UPF0173 family.

The protein is UPF0173 metal-dependent hydrolase Helmi_16730 of Heliobacterium modesticaldum (strain ATCC 51547 / Ice1).